A 1073-amino-acid polypeptide reads, in one-letter code: Self-sufficient cytochrome P450 monooxygenase CYP505AG1 (1073 aa).

Cys409 is a heme binding site. The region spanning 501-644 is the Flavodoxin-like domain; that stretch reads VTILYGSNSG…DLENWEDEHL (144 aa). Residues 507–511 and 588–620 contribute to the FMN site; these read SNSGT and VFACGHHDWAKTFYKVPIMIDELLARAGAHRVA. Residues 680–909 form the FAD-binding FR-type domain; that stretch reads HNAVECIVSE…RPCKKQFHLP (230 aa).

This sequence in the N-terminal section; belongs to the cytochrome P450 family. FAD serves as cofactor. FMN is required as a cofactor. Requires heme as cofactor.

The enzyme catalyses 2 oxidized [cytochrome P450] + NADPH = 2 reduced [cytochrome P450] + NADP(+) + H(+). It carries out the reaction an organic molecule + reduced [NADPH--hemoprotein reductase] + O2 = an alcohol + oxidized [NADPH--hemoprotein reductase] + H2O + H(+). The catalysed reaction is dodecanoate + reduced [NADPH--hemoprotein reductase] + O2 = 10-hydroxydodecanoate + oxidized [NADPH--hemoprotein reductase] + H2O + H(+). It catalyses the reaction tetradecanoate + reduced [NADPH--hemoprotein reductase] + O2 = 12-hydroxytetradecanoate + oxidized [NADPH--hemoprotein reductase] + H2O + H(+). In terms of biological role, self-sufficient cytochrome P450 monooxygenase that catalyzes the regioselective in-chain hydroxylation of alkanes, fatty alcohols, and fatty acids, giving sub-terminal hydroxylation by acting preferentially on the omega-2 position. Prefers fatty acids as substrates, since it hydroxylates the small amounts of dodecanoic acid formed in the presence of an excess of 1-dodecanol. The polypeptide is Self-sufficient cytochrome P450 monooxygenase CYP505AG1 (Oidiodendron maius (strain Zn)).